The primary structure comprises 226 residues: N-(5'-phosphoribosyl)anthranilate isomerase 2 (226 aa).

This sequence belongs to the TrpF family.

It catalyses the reaction N-(5-phospho-beta-D-ribosyl)anthranilate = 1-(2-carboxyphenylamino)-1-deoxy-D-ribulose 5-phosphate. Its pathway is amino-acid biosynthesis; L-tryptophan biosynthesis; L-tryptophan from chorismate: step 3/5. This Methanosarcina mazei (strain ATCC BAA-159 / DSM 3647 / Goe1 / Go1 / JCM 11833 / OCM 88) (Methanosarcina frisia) protein is N-(5'-phosphoribosyl)anthranilate isomerase 2 (trpF2).